A 182-amino-acid chain; its full sequence is Large ribosomal subunit protein bL25 (182 aa).

This sequence belongs to the bacterial ribosomal protein bL25 family. CTC subfamily. As to quaternary structure, part of the 50S ribosomal subunit; part of the 5S rRNA/L5/L18/L25 subcomplex. Contacts the 5S rRNA. Binds to the 5S rRNA independently of L5 and L18.

Functionally, this is one of the proteins that binds to the 5S RNA in the ribosome where it forms part of the central protuberance. In Borrelia hermsii (strain HS1 / DAH), this protein is Large ribosomal subunit protein bL25.